The sequence spans 367 residues: Histidinol-phosphate aminotransferase 1 (367 aa).

Lys-229 is subject to N6-(pyridoxal phosphate)lysine.

Belongs to the class-II pyridoxal-phosphate-dependent aminotransferase family. Histidinol-phosphate aminotransferase subfamily. Homodimer. Pyridoxal 5'-phosphate serves as cofactor.

The enzyme catalyses L-histidinol phosphate + 2-oxoglutarate = 3-(imidazol-4-yl)-2-oxopropyl phosphate + L-glutamate. It participates in amino-acid biosynthesis; L-histidine biosynthesis; L-histidine from 5-phospho-alpha-D-ribose 1-diphosphate: step 7/9. The protein is Histidinol-phosphate aminotransferase 1 of Idiomarina loihiensis (strain ATCC BAA-735 / DSM 15497 / L2-TR).